The chain runs to 544 residues: Fructose dehydrogenase large subunit (544 aa).

14 to 30 (GAGICGSLLAHKLVRNG) is a binding site for FAD. Histidine 478 functions as the Proton acceptor in the catalytic mechanism.

Belongs to the GMC oxidoreductase family. As to quaternary structure, heterotrimer composed of FdhL, FdhS and FdhC. FAD serves as cofactor.

Its subcellular location is the cell membrane. It carries out the reaction keto-D-fructose + a ubiquinone = 5-dehydro-D-fructose + a ubiquinol. In terms of biological role, catalytic subunit of fructose dehydrogenase, an enzyme that catalyzes the oxidation of D-fructose to produce 5-keto-D-fructose. This is Fructose dehydrogenase large subunit (fdhL) from Gluconobacter japonicus.